Reading from the N-terminus, the 171-residue chain is 3-hydroxydecanoyl-[acyl-carrier-protein] dehydratase (171 aa).

Residue H70 is part of the active site.

Belongs to the thioester dehydratase family. FabA subfamily. As to quaternary structure, homodimer.

The protein resides in the cytoplasm. It carries out the reaction a (3R)-hydroxyacyl-[ACP] = a (2E)-enoyl-[ACP] + H2O. It catalyses the reaction (3R)-hydroxydecanoyl-[ACP] = (2E)-decenoyl-[ACP] + H2O. The enzyme catalyses (2E)-decenoyl-[ACP] = (3Z)-decenoyl-[ACP]. Its pathway is lipid metabolism; fatty acid biosynthesis. Its function is as follows. Necessary for the introduction of cis unsaturation into fatty acids. Catalyzes the dehydration of (3R)-3-hydroxydecanoyl-ACP to E-(2)-decenoyl-ACP and then its isomerization to Z-(3)-decenoyl-ACP. Can catalyze the dehydratase reaction for beta-hydroxyacyl-ACPs with saturated chain lengths up to 16:0, being most active on intermediate chain length. This Shewanella loihica (strain ATCC BAA-1088 / PV-4) protein is 3-hydroxydecanoyl-[acyl-carrier-protein] dehydratase.